A 383-amino-acid chain; its full sequence is MGLRASGTGFVVLVLLQSCAAYKLICYYTSWSQYREGDGSCFPDAIDPFLCTHIIYSFANISNNEIDTWEWNDVTLYDTLNTLKNRNPKLKTLLSVGGWNFGPERFSKIASKTQSRRTFIKSVPPFLRTHGFDGLDLAWLYPGRRDKRHLTGLVKEMKAEFAREAQAGTERLLLSAAVSAGKIAIDRGYDIAQISRHLDFISLLTYDFHGAWRQTVGHHSPLFRGQEDASSDRFSNADYAVSYMLRLGAPANKLVMGIPTFGRSFTLASSKTDVGAPISGPGIPGRFTKEKGILAYYEICDFLHGATTHRFRDQQVPYATKGNQWVAYDDQESVKNKARYLKNRQLAGAMVWALDLDDFRGTFCGQNLTFPLTSAVKDVLAEV.

Positions 1-21 are cleaved as a signal peptide; the sequence is MGLRASGTGFVVLVLLQSCAA. In terms of domain architecture, GH18 spans 22-383; sequence YKLICYYTSW…SAVKDVLAEV (362 aa). Cysteine 26 and cysteine 51 are oxidised to a cystine. Asparagine 60 is a glycosylation site (N-linked (GlcNAc...) asparagine). Residues 70–71, 97–100, tyrosine 141, 204–207, and arginine 263 each bind chitin; these read EW, GGWN, and LTYD. A disulfide bridge links cysteine 300 with cysteine 364. The interval 324–338 is important for AKT1 activation and IL8 production; it reads QWVAYDDQESVKNKA. Tryptophan 352 lines the chitin pocket. Asparagine 367 carries an N-linked (GlcNAc...) asparagine glycan.

This sequence belongs to the glycosyl hydrolase 18 family. As to quaternary structure, monomer.

It is found in the secreted. Its subcellular location is the extracellular space. It localises to the cytoplasm. The protein localises to the perinuclear region. The protein resides in the endoplasmic reticulum. Carbohydrate-binding lectin with a preference for chitin. Has no chitinase activity. May play a role in tissue remodeling and in the capacity of cells to respond to and cope with changes in their environment. Plays a role in T-helper cell type 2 (Th2) inflammatory response and IL-13-induced inflammation, regulating allergen sensitization, inflammatory cell apoptosis, dendritic cell accumulation and M2 macrophage differentiation. Facilitates invasion of pathogenic enteric bacteria into colonic mucosa and lymphoid organs. Mediates activation of AKT1 signaling pathway and subsequent IL8 production in colonic epithelial cells. Regulates antibacterial responses in lung by contributing to macrophage bacterial killing, controlling bacterial dissemination and augmenting host tolerance. Also regulates hyperoxia-induced injury, inflammation and epithelial apoptosis in lung. The protein is Chitinase-3-like protein 1 (CHI3L1) of Capra hircus (Goat).